Consider the following 977-residue polypeptide: Bifunctional glutamine synthetase adenylyltransferase/adenylyl-removing enzyme (977 aa).

The interval 1 to 457 (MRLPLPSDLP…HFRQVIADPD (457 aa)) is adenylyl removase. Residues 468-977 (GGEWSPLWEQ…RRIWGELGLS (510 aa)) form an adenylyl transferase region.

The protein belongs to the GlnE family. Mg(2+) serves as cofactor.

The catalysed reaction is [glutamine synthetase]-O(4)-(5'-adenylyl)-L-tyrosine + phosphate = [glutamine synthetase]-L-tyrosine + ADP. It carries out the reaction [glutamine synthetase]-L-tyrosine + ATP = [glutamine synthetase]-O(4)-(5'-adenylyl)-L-tyrosine + diphosphate. In terms of biological role, involved in the regulation of glutamine synthetase GlnA, a key enzyme in the process to assimilate ammonia. When cellular nitrogen levels are high, the C-terminal adenylyl transferase (AT) inactivates GlnA by covalent transfer of an adenylyl group from ATP to specific tyrosine residue of GlnA, thus reducing its activity. Conversely, when nitrogen levels are low, the N-terminal adenylyl removase (AR) activates GlnA by removing the adenylyl group by phosphorolysis, increasing its activity. The regulatory region of GlnE binds the signal transduction protein PII (GlnB) which indicates the nitrogen status of the cell. The sequence is that of Bifunctional glutamine synthetase adenylyltransferase/adenylyl-removing enzyme from Pseudomonas putida (strain ATCC 47054 / DSM 6125 / CFBP 8728 / NCIMB 11950 / KT2440).